The following is a 513-amino-acid chain: ATP synthase subunit alpha 1 (513 aa).

169 to 176 (GDRQTGKT) lines the ATP pocket.

Belongs to the ATPase alpha/beta chains family. In terms of assembly, F-type ATPases have 2 components, CF(1) - the catalytic core - and CF(0) - the membrane proton channel. CF(1) has five subunits: alpha(3), beta(3), gamma(1), delta(1), epsilon(1). CF(0) has three main subunits: a(1), b(2) and c(9-12). The alpha and beta chains form an alternating ring which encloses part of the gamma chain. CF(1) is attached to CF(0) by a central stalk formed by the gamma and epsilon chains, while a peripheral stalk is formed by the delta and b chains.

The protein resides in the cell inner membrane. It catalyses the reaction ATP + H2O + 4 H(+)(in) = ADP + phosphate + 5 H(+)(out). In terms of biological role, produces ATP from ADP in the presence of a proton gradient across the membrane. The alpha chain is a regulatory subunit. This Methylococcus capsulatus (strain ATCC 33009 / NCIMB 11132 / Bath) protein is ATP synthase subunit alpha 1.